Here is a 341-residue protein sequence, read N- to C-terminus: L-threonine 3-dehydrogenase (341 aa).

Cys38 provides a ligand contact to Zn(2+). Active-site charge relay system residues include Thr40 and His43. Positions 63, 64, 93, 96, 99, and 107 each coordinate Zn(2+). NAD(+) contacts are provided by residues Ile175, Asp195, Arg200, 262–264 (LGI), and 286–287 (IY).

This sequence belongs to the zinc-containing alcohol dehydrogenase family. Homotetramer. Requires Zn(2+) as cofactor.

The protein localises to the cytoplasm. The enzyme catalyses L-threonine + NAD(+) = (2S)-2-amino-3-oxobutanoate + NADH + H(+). The protein operates within amino-acid degradation; L-threonine degradation via oxydo-reductase pathway; glycine from L-threonine: step 1/2. Functionally, catalyzes the NAD(+)-dependent oxidation of L-threonine to 2-amino-3-ketobutyrate. The chain is L-threonine 3-dehydrogenase from Escherichia coli (strain K12 / MC4100 / BW2952).